We begin with the raw amino-acid sequence, 822 residues long: Probable phosphoketolase (822 aa).

Belongs to the XFP family. Thiamine diphosphate serves as cofactor.

The polypeptide is Probable phosphoketolase (Nocardia farcinica (strain IFM 10152)).